The primary structure comprises 292 residues: 4-hydroxy-tetrahydrodipicolinate synthase (292 aa).

Threonine 45 is a pyruvate binding site. Tyrosine 133 acts as the Proton donor/acceptor in catalysis. Lysine 162 functions as the Schiff-base intermediate with substrate in the catalytic mechanism. Residue isoleucine 204 coordinates pyruvate.

It belongs to the DapA family. In terms of assembly, homotetramer; dimer of dimers.

It localises to the cytoplasm. It catalyses the reaction L-aspartate 4-semialdehyde + pyruvate = (2S,4S)-4-hydroxy-2,3,4,5-tetrahydrodipicolinate + H2O + H(+). The protein operates within amino-acid biosynthesis; L-lysine biosynthesis via DAP pathway; (S)-tetrahydrodipicolinate from L-aspartate: step 3/4. Functionally, catalyzes the condensation of (S)-aspartate-beta-semialdehyde [(S)-ASA] and pyruvate to 4-hydroxy-tetrahydrodipicolinate (HTPA). The chain is 4-hydroxy-tetrahydrodipicolinate synthase from Maridesulfovibrio salexigens (strain ATCC 14822 / DSM 2638 / NCIMB 8403 / VKM B-1763) (Desulfovibrio salexigens).